The following is a 319-amino-acid chain: Cytochrome f (319 aa).

Residues 1-35 form the signal peptide; the sequence is METRNIFSWIKEQITRSISVSLMIYIITRTAVSNA. Residues Tyr-36, Cys-56, Cys-59, and His-60 each contribute to the heme site. A helical transmembrane segment spans residues 285–305; it reads VQGLLFFLASVILAQIFLVLK.

Belongs to the cytochrome f family. In terms of assembly, the 4 large subunits of the cytochrome b6-f complex are cytochrome b6, subunit IV (17 kDa polypeptide, petD), cytochrome f and the Rieske protein, while the 4 small subunits are PetG, PetL, PetM and PetN. The complex functions as a dimer. Requires heme as cofactor.

The protein resides in the plastid. It localises to the chloroplast thylakoid membrane. Component of the cytochrome b6-f complex, which mediates electron transfer between photosystem II (PSII) and photosystem I (PSI), cyclic electron flow around PSI, and state transitions. The polypeptide is Cytochrome f (Coffea arabica (Arabian coffee)).